We begin with the raw amino-acid sequence, 211 residues long: Stromal cell-derived factor 2 (211 aa).

The signal sequence occupies residues 1–18 (MAVVSLLLFGGLWSAVGS). 3 MIR domains span residues 21–75 (LAVV…IRGK), 83–138 (GTPI…VLCN), and 139–193 (GPYW…AMEG).

The protein localises to the secreted. The chain is Stromal cell-derived factor 2 (SDF2) from Bos taurus (Bovine).